The chain runs to 158 residues: Naphthalene 1,2-dioxygenase system, small oxygenase component (158 aa).

It belongs to the bacterial ring-hydroxylating dioxygenase beta subunit family. As to quaternary structure, the naphthalene dioxygenase (NDO) multicomponent enzyme system is composed of an electron transfer component and a dioxygenase component (iron sulfur protein (ISP)). The electron transfer component is composed of a ferredoxin reductase (NdoR) and a ferredoxin (NdoA), and the dioxygenase component is formed of a heterohexamer (trimer of heterodimers) of three large alpha subunits (NdoB) and three small beta subunits (NdoC).

Its pathway is aromatic compound metabolism; naphthalene degradation. Functionally, component of the naphthalene dioxygenase (NDO) multicomponent enzyme system which catalyzes the incorporation of both atoms of molecular oxygen into naphthalene to form cis-(1R,2S)-dihydroxy-1,2-dihydronaphthalene. The beta subunit seems to have a structural role in the holoenzyme. This chain is Naphthalene 1,2-dioxygenase system, small oxygenase component, found in Pseudomonas fluorescens.